The chain runs to 313 residues: Ribosomal RNA small subunit methyltransferase H (313 aa).

S-adenosyl-L-methionine-binding positions include glycine 36–histidine 38, aspartate 56, phenylalanine 80, aspartate 102, and glutamine 109.

It belongs to the methyltransferase superfamily. RsmH family.

Its subcellular location is the cytoplasm. The catalysed reaction is cytidine(1402) in 16S rRNA + S-adenosyl-L-methionine = N(4)-methylcytidine(1402) in 16S rRNA + S-adenosyl-L-homocysteine + H(+). Its function is as follows. Specifically methylates the N4 position of cytidine in position 1402 (C1402) of 16S rRNA. The protein is Ribosomal RNA small subunit methyltransferase H of Haemophilus ducreyi (strain 35000HP / ATCC 700724).